A 53-amino-acid chain; its full sequence is Large ribosomal subunit protein bL32 (53 aa).

The interval 1-27 is disordered; that stretch reads MAVQQNKKSRSRRDMRRSHDALTTAAV. Positions 7–16 are enriched in basic residues; that stretch reads KKSRSRRDMR.

It belongs to the bacterial ribosomal protein bL32 family.

The polypeptide is Large ribosomal subunit protein bL32 (Glaesserella parasuis serovar 5 (strain SH0165) (Haemophilus parasuis)).